The chain runs to 534 residues: C-type lectin domain family 18 member A (534 aa).

A disordered region spans residues 47 to 88 (GALPVAGKPEPMARSLASAPVSPWHHMDRGSTTPAKARSHSA). The 132-residue stretch at 139-270 (LTAHNRLRSR…EAMEAFVCAY (132 aa)) folds into the SCP domain. The region spanning 316-349 (PRNPCRMSCRNLGHLNISTCRCHCQPGYTGRYCQ) is the EGF-like domain. Cystine bridges form between cysteine 324/cysteine 337, cysteine 339/cysteine 348, cysteine 415/cysteine 520, and cysteine 496/cysteine 512. In terms of domain architecture, C-type lectin spans 394–521 (IDGDCFMVSP…CKTRNRYICQ (128 aa)).

The protein localises to the secreted. In Mus musculus (Mouse), this protein is C-type lectin domain family 18 member A (Clec18a).